We begin with the raw amino-acid sequence, 489 residues long: Beta-glucosidase 14 (489 aa).

Positions 1 to 21 (MTSKYFSVLVFIILASNEVVA) are cleaved as a signal peptide. Q49 serves as a coordination point for a beta-D-glucoside. A glycan (N-linked (GlcNAc...) asparagine) is linked at N80. Residues H153 and 198–199 (NE) contribute to the a beta-D-glucoside site. The active-site Proton donor is E199. An intrachain disulfide couples C218 to C226. The N-linked (GlcNAc...) asparagine glycan is linked to N225. Y343 lines the a beta-D-glucoside pocket. The N-linked (GlcNAc...) asparagine glycan is linked to N357. Residues E396, W441, 448-449 (EW), and F457 each bind a beta-D-glucoside. E396 serves as the catalytic Nucleophile.

The protein belongs to the glycosyl hydrolase 1 family.

The catalysed reaction is Hydrolysis of terminal, non-reducing beta-D-glucosyl residues with release of beta-D-glucose.. This Arabidopsis thaliana (Mouse-ear cress) protein is Beta-glucosidase 14.